The following is a 311-amino-acid chain: Acetaldehyde dehydrogenase 2 (311 aa).

NAD(+) is bound at residue 11–14 (SGNI). Catalysis depends on cysteine 131, which acts as the Acyl-thioester intermediate. NAD(+) contacts are provided by residues 162 to 170 (SAGPGTRAN) and asparagine 289.

Belongs to the acetaldehyde dehydrogenase family.

The enzyme catalyses acetaldehyde + NAD(+) + CoA = acetyl-CoA + NADH + H(+). The protein is Acetaldehyde dehydrogenase 2 (mhpF) of Azotobacter vinelandii (strain DJ / ATCC BAA-1303).